The chain runs to 350 residues: Phosphoribosylformylglycinamidine cyclo-ligase (350 aa).

This sequence belongs to the AIR synthase family.

The protein localises to the cytoplasm. The catalysed reaction is 2-formamido-N(1)-(5-O-phospho-beta-D-ribosyl)acetamidine + ATP = 5-amino-1-(5-phospho-beta-D-ribosyl)imidazole + ADP + phosphate + H(+). It participates in purine metabolism; IMP biosynthesis via de novo pathway; 5-amino-1-(5-phospho-D-ribosyl)imidazole from N(2)-formyl-N(1)-(5-phospho-D-ribosyl)glycinamide: step 2/2. The polypeptide is Phosphoribosylformylglycinamidine cyclo-ligase (Nitratidesulfovibrio vulgaris (strain DSM 19637 / Miyazaki F) (Desulfovibrio vulgaris)).